The chain runs to 52 residues: Rubredoxin (52 aa).

The residue at position 1 (Met-1) is an N-formylmethionine; partial. In terms of domain architecture, Rubredoxin-like spans 1–52; that stretch reads MKKYGCLVCGYVYDPAKGDPDHGIAPGTAFEDLPADWVCPLCGVSKDEFEPL. Fe cation contacts are provided by Cys-6, Cys-9, Cys-39, and Cys-42.

This sequence belongs to the rubredoxin family. Requires Fe(3+) as cofactor. Observed in four forms, with and without iron, and with and without formylation at Met-1.

Functionally, rubredoxin is a small nonheme, iron protein lacking acid-labile sulfide. Its single Fe, chelated to 4 Cys, functions as an electron acceptor and may also stabilize the conformation of the molecule. This Heliobacterium mobile (Heliobacillus mobilis) protein is Rubredoxin.